We begin with the raw amino-acid sequence, 81 residues long: Small ribosomal subunit protein bS16c (81 aa).

The protein belongs to the bacterial ribosomal protein bS16 family.

Its subcellular location is the plastid. The protein resides in the chloroplast. In Emiliania huxleyi (Coccolithophore), this protein is Small ribosomal subunit protein bS16c.